Here is a 386-residue protein sequence, read N- to C-terminus: Probable protein phosphatase 2C 36 (386 aa).

Positions 60-363 (ELSVAVVQGN…DDITVIVLFI (304 aa)) constitute a PPM-type phosphatase domain. Residues Asp-94, Gly-95, Asp-295, and Asp-354 each contribute to the Mn(2+) site.

Belongs to the PP2C family. Mg(2+) serves as cofactor. Mn(2+) is required as a cofactor.

It carries out the reaction O-phospho-L-seryl-[protein] + H2O = L-seryl-[protein] + phosphate. It catalyses the reaction O-phospho-L-threonyl-[protein] + H2O = L-threonyl-[protein] + phosphate. The polypeptide is Probable protein phosphatase 2C 36 (Oryza sativa subsp. japonica (Rice)).